Reading from the N-terminus, the 505-residue chain is Protein disulfide-isomerase A3 (505 aa).

The N-terminal stretch at 1–24 (MRLRRLALFPGVALLLAAARLAAA) is a signal peptide. The Thioredoxin 1 domain occupies 25 to 133 (SDVLELTDDN…IVSHLKKQAG (109 aa)). Catalysis depends on nucleophile residues cysteine 57 and cysteine 60. Cysteines 57 and 60 form a disulfide. Lysine 61 is subject to N6-methyllysine. An intrachain disulfide couples cysteine 85 to cysteine 92. Residue lysine 129 is modified to N6-succinyllysine. Lysine 152 bears the N6-acetyllysine mark. Lysine 218 carries the N6-succinyllysine modification. Lysine 252 is subject to N6-acetyllysine. Position 319 is a phosphothreonine (threonine 319). In terms of domain architecture, Thioredoxin 2 spans 343-485 (SRDGKALERF…FISYLQREAT (143 aa)). The residue at position 362 (lysine 362) is an N6-acetyllysine. Catalysis depends on nucleophile residues cysteine 406 and cysteine 409. Residues cysteine 406 and cysteine 409 are joined by a disulfide bond. The segment at 484 to 505 (ATNPPVIQEEKPKKKKKAQEDL) is disordered. A compositionally biased stretch (basic and acidic residues) spans 491-505 (QEEKPKKKKKAQEDL). The residue at position 494 (lysine 494) is an N6-acetyllysine. The Prevents secretion from ER signature appears at 502-505 (QEDL).

Belongs to the protein disulfide isomerase family. As to quaternary structure, part of the major histocompatibility complex class I (MHC I) peptide loading complex composed of TAP1, TAP2, B2M, MHC heavy chain, TAPBP, PDIA3, and CALR. Interacts with ERP27 and CANX. Interacts with SERPINA2 and with SERPINA1. Interacts with ATP2A2. Post-translationally, within the major histocompatibility complex class I (MHC I) peptide loading complex forms reversible disulfide-linked heterodimers with TAPBP as part of its protein folding chaperone activity. This is essential to assist the dynamic assembly of the MHC I complex with high affinity antigens in the endoplasmic reticulum. Phosphorylated.

The protein resides in the endoplasmic reticulum. The protein localises to the endoplasmic reticulum lumen. It localises to the melanosome. It carries out the reaction Catalyzes the rearrangement of -S-S- bonds in proteins.. Functionally, protein disulfide isomerase that catalyzes the formation, isomerization, and reduction or oxidation of disulfide bonds in client proteins and functions as a protein folding chaperone. Core component of the major histocompatibility complex class I (MHC I) peptide loading complex where it functions as an essential folding chaperone for TAPBP. Through TAPBP, assists the dynamic assembly of the MHC I complex with high affinity antigens in the endoplasmic reticulum. Therefore, plays a crucial role in the presentation of antigens to cytotoxic T cells in adaptive immunity. This is Protein disulfide-isomerase A3 (PDIA3) from Chlorocebus aethiops (Green monkey).